We begin with the raw amino-acid sequence, 308 residues long: Pantothenate synthetase (308 aa).

ATP is bound at residue 39–46; the sequence is MGALHDGH. H46 serves as the catalytic Proton donor. Q71 contributes to the (R)-pantoate binding site. Q71 contributes to the beta-alanine binding site. 157–160 provides a ligand contact to ATP; the sequence is GEKD. Q163 serves as a coordination point for (R)-pantoate. Residues V186 and 194 to 197 contribute to the ATP site; that span reads MSSR. A disordered region spans residues 286 to 308; that stretch reads IETPAGTAGPDGDRQYAQSPWRN.

Belongs to the pantothenate synthetase family. Homodimer.

Its subcellular location is the cytoplasm. It carries out the reaction (R)-pantoate + beta-alanine + ATP = (R)-pantothenate + AMP + diphosphate + H(+). The protein operates within cofactor biosynthesis; (R)-pantothenate biosynthesis; (R)-pantothenate from (R)-pantoate and beta-alanine: step 1/1. Catalyzes the condensation of pantoate with beta-alanine in an ATP-dependent reaction via a pantoyl-adenylate intermediate. This Mycobacterium avium (strain 104) protein is Pantothenate synthetase.